The chain runs to 60 residues: Cytotoxin SP15a (60 aa).

4 disulfide bridges follow: C3/C21, C14/C38, C42/C53, and C54/C59.

Belongs to the three-finger toxin family. Short-chain subfamily. Type IA cytotoxin sub-subfamily. Monomer in solution; Homodimer and oligomer in the presence of negatively charged lipids forming a pore with a size ranging between 20 and 30 Angstroms. In terms of tissue distribution, expressed by the venom gland.

The protein resides in the secreted. Its subcellular location is the target cell membrane. Its function is as follows. Shows cytolytic activity on many different cells by forming pore in lipid membranes. In vivo, increases heart rate or kills the animal by cardiac arrest. In addition, it binds to heparin with high affinity, interacts with Kv channel-interacting protein 1 (KCNIP1) in a calcium-independent manner, and binds to integrin alpha-V/beta-3 (ITGAV/ITGB3) with moderate affinity. The chain is Cytotoxin SP15a from Naja atra (Chinese cobra).